Here is a 551-residue protein sequence, read N- to C-terminus: uncharacterized protein (551 aa).

Disordered regions lie at residues 66-111, 130-165, 180-229, and 277-303; these read GNNK…STNL, PEATGLMKEDITPVVNTSKQSSTGTQEESSKPEKSN, AFNP…LSNL, and AFTSPRLPSPPQSTRPSSTRFPSVPLS. Position 74 is a phosphoserine (Ser74). Polar residues-rich tracts occupy residues 92–111 and 143–156; these read GFSNRESMSENCFSKSSTNL and VVNTSKQSSTGTQE. The span at 182–193 shows a compositional bias: low complexity; that stretch reads NPSSVLPSNSSS. The segment covering 204–226 has biased composition (polar residues); it reads KETYQPNTFRRSPLKNDTGSVEL. Positions 290–299 are enriched in low complexity; the sequence is TRPSSTRFPS.

This is an uncharacterized protein from Schizosaccharomyces pombe (strain 972 / ATCC 24843) (Fission yeast).